An 85-amino-acid chain; its full sequence is Conotoxin Cap15a (85 aa).

The N-terminal stretch at 1–23 (MEKLTFLILVATVLLTIHVLVQS) is a signal peptide. The propeptide occupies 24–49 (VGDKHLKRRPKQYATKHLSALMRGHR). Position 50 is a pyrrolidone carboxylic acid (Gln50).

It belongs to the conotoxin O2 superfamily. Contains 4 disulfide bonds. Expressed by the venom duct.

Its subcellular location is the secreted. This Conus capitaneus (Captain cone) protein is Conotoxin Cap15a.